Reading from the N-terminus, the 176-residue chain is Large ribosomal subunit protein eL20 (176 aa).

A Glycyl lysine isopeptide (Lys-Gly) (interchain with G-Cter in SUMO2) cross-link involves residue Lys11. Residue Tyr63 is modified to Phosphotyrosine. A Phosphoserine modification is found at Ser71. An N6-succinyllysine modification is found at Lys76. Phosphoserine is present on Ser123. Residues Lys128 and Lys170 each participate in a glycyl lysine isopeptide (Lys-Gly) (interchain with G-Cter in SUMO2) cross-link.

The protein belongs to the eukaryotic ribosomal protein eL20 family. In terms of assembly, component of the large ribosomal subunit. Binds IPO9 with high affinity.

Its subcellular location is the cytoplasm. In terms of biological role, component of the large ribosomal subunit. The ribosome is a large ribonucleoprotein complex responsible for the synthesis of proteins in the cell. The chain is Large ribosomal subunit protein eL20 (RPL18A) from Bos taurus (Bovine).